A 258-amino-acid chain; its full sequence is MYDDIFFYLALWVIQSVYGAWDWAKNWVFWTCSYLLNFLYHHHCSRDLIRRDTKKLKKKPKHIAVIIECVEDGGIEGLIHDACELSAWCVCSNIRELTIYERKGFLKQSPEAVEKAIYSHLPFYLGGDKCTVHVTNPCSPDEKNQNDCVDLKVHLIAKEDGRDAIIDLTRGLADLCTKKVISSTQVTLELIDKELKESVIPEPDLLIIFAPLLKLQGFPPWQLRLCEIFHDPILYTTNYLTFFKALVHYSNAEMRLGH.

Residues 5–21 (IFFYLALWVIQSVYGAW) form a helical membrane-spanning segment.

Belongs to the UPP synthase family. In terms of assembly, forms an active dehydrodolichyl diphosphate synthase complex with SPAC4D7.04c. The cofactor is Mg(2+).

Its subcellular location is the endoplasmic reticulum membrane. The enzyme catalyses n isopentenyl diphosphate + (2E,6E)-farnesyl diphosphate = a di-trans,poly-cis-polyprenyl diphosphate + n diphosphate. Its pathway is protein modification; protein glycosylation. With SPAC4D7.04c, forms the dehydrodolichyl diphosphate synthase (DDS) complex, an essential component of the dolichol monophosphate (Dol-P) biosynthetic machinery. Adds multiple copies of isopentenyl pyrophosphate (IPP) to farnesyl pyrophosphate (FPP) to produce dehydrodolichyl diphosphate (Dedol-PP), a precursor of dolichol which is utilized as a sugar carrier in protein glycosylation in the endoplasmic reticulum (ER). The protein is Dehydrodolichyl diphosphate synthase complex subunit nus1 (nus1) of Schizosaccharomyces pombe (strain 972 / ATCC 24843) (Fission yeast).